The sequence spans 100 residues: Small ribosomal subunit protein uS14c (100 aa).

Residues 1–31 (MAKKSLIQREKKRQKLEQKYHSIRRSSKKEI) form a disordered region.

The protein belongs to the universal ribosomal protein uS14 family. Part of the 30S ribosomal subunit.

It localises to the plastid. Its subcellular location is the chloroplast. Functionally, binds 16S rRNA, required for the assembly of 30S particles. The chain is Small ribosomal subunit protein uS14c from Atropa belladonna (Belladonna).